The sequence spans 312 residues: Pantothenate kinase (312 aa).

97 to 104 lines the ATP pocket; sequence GSVAVGKS.

The protein belongs to the prokaryotic pantothenate kinase family.

It is found in the cytoplasm. It catalyses the reaction (R)-pantothenate + ATP = (R)-4'-phosphopantothenate + ADP + H(+). The protein operates within cofactor biosynthesis; coenzyme A biosynthesis; CoA from (R)-pantothenate: step 1/5. The chain is Pantothenate kinase from Mycolicibacterium gilvum (strain PYR-GCK) (Mycobacterium gilvum (strain PYR-GCK)).